The sequence spans 382 residues: Chorismate synthase (382 aa).

2 residues coordinate NADP(+): R39 and R45. Residues 89–113 are disordered; it reads SPEPGGEPRKKALTDARPGHADLTG. Positions 94 to 108 are enriched in basic and acidic residues; that stretch reads GEPRKKALTDARPGH. Residues 128 to 130, 246 to 247, A290, 305 to 309, and R331 contribute to the FMN site; these read RAS, QA, and KPIAT.

The protein belongs to the chorismate synthase family. As to quaternary structure, homotetramer. The cofactor is FMNH2.

The catalysed reaction is 5-O-(1-carboxyvinyl)-3-phosphoshikimate = chorismate + phosphate. The protein operates within metabolic intermediate biosynthesis; chorismate biosynthesis; chorismate from D-erythrose 4-phosphate and phosphoenolpyruvate: step 7/7. In terms of biological role, catalyzes the anti-1,4-elimination of the C-3 phosphate and the C-6 proR hydrogen from 5-enolpyruvylshikimate-3-phosphate (EPSP) to yield chorismate, which is the branch point compound that serves as the starting substrate for the three terminal pathways of aromatic amino acid biosynthesis. This reaction introduces a second double bond into the aromatic ring system. This is Chorismate synthase from Deinococcus radiodurans (strain ATCC 13939 / DSM 20539 / JCM 16871 / CCUG 27074 / LMG 4051 / NBRC 15346 / NCIMB 9279 / VKM B-1422 / R1).